A 210-amino-acid polypeptide reads, in one-letter code: Ribosomal RNA large subunit methyltransferase E (210 aa).

S-adenosyl-L-methionine is bound by residues glycine 60, tryptophan 62, aspartate 80, aspartate 96, and aspartate 121. Residue lysine 161 is the Proton acceptor of the active site.

This sequence belongs to the class I-like SAM-binding methyltransferase superfamily. RNA methyltransferase RlmE family.

It is found in the cytoplasm. It carries out the reaction uridine(2552) in 23S rRNA + S-adenosyl-L-methionine = 2'-O-methyluridine(2552) in 23S rRNA + S-adenosyl-L-homocysteine + H(+). Its function is as follows. Specifically methylates the uridine in position 2552 of 23S rRNA at the 2'-O position of the ribose in the fully assembled 50S ribosomal subunit. This is Ribosomal RNA large subunit methyltransferase E from Vesicomyosocius okutanii subsp. Calyptogena okutanii (strain HA).